We begin with the raw amino-acid sequence, 318 residues long: L-lactate dehydrogenase (318 aa).

NAD(+) contacts are provided by residues Val18, Asp39, Lys44, Tyr69, and 83 to 84 (GA). Gln86 and Arg92 together coordinate substrate. Residues Ser105, 122–124 (VSN), and Ser147 each bind NAD(+). 124–127 (NPVD) serves as a coordination point for substrate. Residue 152–155 (DTSR) participates in substrate binding. The active-site Proton acceptor is His179. The residue at position 225 (Tyr225) is a Phosphotyrosine. Thr234 contacts substrate.

This sequence belongs to the LDH/MDH superfamily. LDH family. Homotetramer.

It localises to the cytoplasm. It carries out the reaction (S)-lactate + NAD(+) = pyruvate + NADH + H(+). It participates in fermentation; pyruvate fermentation to lactate; (S)-lactate from pyruvate: step 1/1. Functionally, catalyzes the conversion of lactate to pyruvate. In Clostridium botulinum (strain Langeland / NCTC 10281 / Type F), this protein is L-lactate dehydrogenase.